The chain runs to 270 residues: NAD kinase (270 aa).

The active-site Proton acceptor is the D61. Residues 61–62 (DG), 133–134 (NE), R144, R163, D165, and 176–181 (TAYNLS) contribute to the NAD(+) site.

It belongs to the NAD kinase family. Requires a divalent metal cation as cofactor.

The protein resides in the cytoplasm. The catalysed reaction is NAD(+) + ATP = ADP + NADP(+) + H(+). Its function is as follows. Involved in the regulation of the intracellular balance of NAD and NADP, and is a key enzyme in the biosynthesis of NADP. Catalyzes specifically the phosphorylation on 2'-hydroxyl of the adenosine moiety of NAD to yield NADP. In Natronomonas pharaonis (strain ATCC 35678 / DSM 2160 / CIP 103997 / JCM 8858 / NBRC 14720 / NCIMB 2260 / Gabara) (Halobacterium pharaonis), this protein is NAD kinase.